Reading from the N-terminus, the 234-residue chain is Phosphoribosylaminoimidazole-succinocarboxamide synthase (234 aa).

Belongs to the SAICAR synthetase family.

The catalysed reaction is 5-amino-1-(5-phospho-D-ribosyl)imidazole-4-carboxylate + L-aspartate + ATP = (2S)-2-[5-amino-1-(5-phospho-beta-D-ribosyl)imidazole-4-carboxamido]succinate + ADP + phosphate + 2 H(+). It participates in purine metabolism; IMP biosynthesis via de novo pathway; 5-amino-1-(5-phospho-D-ribosyl)imidazole-4-carboxamide from 5-amino-1-(5-phospho-D-ribosyl)imidazole-4-carboxylate: step 1/2. The polypeptide is Phosphoribosylaminoimidazole-succinocarboxamide synthase (Clostridium botulinum (strain Langeland / NCTC 10281 / Type F)).